The primary structure comprises 322 residues: Methionyl-tRNA formyltransferase (322 aa).

113–116 (SLLP) contributes to the (6S)-5,6,7,8-tetrahydrofolate binding site.

Belongs to the Fmt family.

It catalyses the reaction L-methionyl-tRNA(fMet) + (6R)-10-formyltetrahydrofolate = N-formyl-L-methionyl-tRNA(fMet) + (6S)-5,6,7,8-tetrahydrofolate + H(+). Its function is as follows. Attaches a formyl group to the free amino group of methionyl-tRNA(fMet). The formyl group appears to play a dual role in the initiator identity of N-formylmethionyl-tRNA by promoting its recognition by IF2 and preventing the misappropriation of this tRNA by the elongation apparatus. The chain is Methionyl-tRNA formyltransferase from Bacteroides thetaiotaomicron (strain ATCC 29148 / DSM 2079 / JCM 5827 / CCUG 10774 / NCTC 10582 / VPI-5482 / E50).